The primary structure comprises 457 residues: Adenylosuccinate synthetase isozyme 1 (457 aa).

The disordered stretch occupies residues 1–21 (MSGTRASNDRPPGAGGVKRGR). GTP-binding positions include 42 to 48 (GDEGKGK) and 70 to 72 (GHT). The active-site Proton acceptor is the aspartate 43. Mg(2+) contacts are provided by aspartate 43 and glycine 70. Aspartate 43 provides a ligand contact to substrate. Residues 43-46 (DEGK), 68-71 (NAGH), threonine 163, arginine 177, asparagine 256, threonine 271, and arginine 335 contribute to the IMP site. Histidine 71 serves as the catalytic Proton donor. 331 to 337 (VTTGRKR) serves as a coordination point for substrate. GTP is bound by residues arginine 337, 363–365 (KLD), and 445–448 (GVGK).

This sequence belongs to the adenylosuccinate synthetase family. As to quaternary structure, homodimer. Requires Mg(2+) as cofactor. As to expression, predominantly expressed in skeletal muscle and heart, as well as in several hematopoietic cell lines and solid tumors.

The protein localises to the cytoplasm. It catalyses the reaction IMP + L-aspartate + GTP = N(6)-(1,2-dicarboxyethyl)-AMP + GDP + phosphate + 2 H(+). The protein operates within purine metabolism; AMP biosynthesis via de novo pathway; AMP from IMP: step 1/2. Functionally, component of the purine nucleotide cycle (PNC), which interconverts IMP and AMP to regulate the nucleotide levels in various tissues, and which contributes to glycolysis and ammoniagenesis. Catalyzes the first committed step in the biosynthesis of AMP from IMP. This Homo sapiens (Human) protein is Adenylosuccinate synthetase isozyme 1.